The chain runs to 646 residues: Glutamine--tRNA ligase protein virJ (646 aa).

Residues 25-65 are disordered; it reads NELKKRIQKRARKAAAAANRSNAQQEKGNKPAANKPAAKPE. Residues 38–61 are compositionally biased toward low complexity; it reads AAAAANRSNAQQEKGNKPAANKPA. The short motif at 98–108 is the 'HIGH' region element; it reads PEPNGYLHLGH. ATP-binding positions include 99–101 and 105–111; these read EPN and HLGHAKA. Residues Asp147 and Tyr296 each coordinate L-glutamine. Residues Thr315, 344-345, and 352-354 contribute to the ATP site; these read RL and MSK. The 'KMSKS' region signature appears at 351-355; the sequence is IMSKR.

Belongs to the class-I aminoacyl-tRNA synthetase family.

It catalyses the reaction tRNA(Gln) + L-glutamine + ATP = L-glutaminyl-tRNA(Gln) + AMP + diphosphate. In terms of biological role, glutamine--tRNA ligase; part of the gene cluster that mediates the biosynthesis of virensols and trichoxide, fungal natural products that contain or are derived from a salicylaldehyde core. VirJ does not seem to play any role in virensols and trichoxide biosynthesis. This Hypocrea virens (strain Gv29-8 / FGSC 10586) (Gliocladium virens) protein is Glutamine--tRNA ligase protein virJ.